The primary structure comprises 425 residues: 3-deoxy-D-manno-octulosonic acid transferase (425 aa).

The helical; Signal-anchor transmembrane segment at glutamate 3–valine 23 threads the bilayer. Catalysis depends on glutamate 60, which acts as the Proton acceptor. CMP contacts are provided by residues proline 268–arginine 269, methionine 309–glutamate 311, and asparagine 335–glutamate 338.

It belongs to the glycosyltransferase group 1 family. Glycosyltransferase 30 subfamily.

Its subcellular location is the cell inner membrane. It carries out the reaction lipid IVA (E. coli) + CMP-3-deoxy-beta-D-manno-octulosonate = alpha-Kdo-(2-&gt;6)-lipid IVA (E. coli) + CMP + H(+). It catalyses the reaction alpha-Kdo-(2-&gt;6)-lipid IVA (E. coli) + CMP-3-deoxy-beta-D-manno-octulosonate = alpha-Kdo-(2-&gt;4)-alpha-Kdo-(2-&gt;6)-lipid IVA (E. coli) + CMP + H(+). The protein operates within glycolipid biosynthesis; KDO(2)-lipid A biosynthesis; KDO(2)-lipid A from CMP-3-deoxy-D-manno-octulosonate and lipid IV(A): step 1/4. It participates in glycolipid biosynthesis; KDO(2)-lipid A biosynthesis; KDO(2)-lipid A from CMP-3-deoxy-D-manno-octulosonate and lipid IV(A): step 2/4. It functions in the pathway bacterial outer membrane biogenesis; LPS core biosynthesis. Its function is as follows. Involved in lipopolysaccharide (LPS) biosynthesis. Catalyzes the transfer of two 3-deoxy-D-manno-octulosonate (Kdo) residues from CMP-Kdo to lipid IV(A), the tetraacyldisaccharide-1,4'-bisphosphate precursor of lipid A. The chain is 3-deoxy-D-manno-octulosonic acid transferase (waaA) from Escherichia coli O157:H7.